The primary structure comprises 95 residues: Large ribosomal subunit protein uL23c (95 aa).

This sequence belongs to the universal ribosomal protein uL23 family. As to quaternary structure, part of the 50S ribosomal subunit.

Its subcellular location is the plastid. It localises to the chloroplast. Functionally, binds to 23S rRNA. The sequence is that of Large ribosomal subunit protein uL23c (rpl23) from Chlamydomonas reinhardtii (Chlamydomonas smithii).